Reading from the N-terminus, the 444-residue chain is Xylose isomerase (444 aa).

Residues H101 and D104 contribute to the active site. 7 residues coordinate Mg(2+): E232, E268, H271, D296, D307, D309, and D339.

Belongs to the xylose isomerase family. Homotetramer. The cofactor is Mg(2+).

The protein resides in the cytoplasm. The enzyme catalyses alpha-D-xylose = alpha-D-xylulofuranose. The polypeptide is Xylose isomerase (Thermotoga sp. (strain RQ2)).